The following is a 353-amino-acid chain: Phosphate acyltransferase (353 aa).

It belongs to the PlsX family. As to quaternary structure, homodimer. Probably interacts with PlsY.

It is found in the cytoplasm. It carries out the reaction a fatty acyl-[ACP] + phosphate = an acyl phosphate + holo-[ACP]. It participates in lipid metabolism; phospholipid metabolism. Catalyzes the reversible formation of acyl-phosphate (acyl-PO(4)) from acyl-[acyl-carrier-protein] (acyl-ACP). This enzyme utilizes acyl-ACP as fatty acyl donor, but not acyl-CoA. The chain is Phosphate acyltransferase from Rhodopseudomonas palustris (strain ATCC BAA-98 / CGA009).